The chain runs to 734 residues: 5-methyltetrahydropteroyltriglutamate--homocysteine methyltransferase (734 aa).

Residues R15 to K18 and K104 each bind 5-methyltetrahydropteroyltri-L-glutamate. Residues I409–S411 and E462 contribute to the L-homocysteine site. L-methionine contacts are provided by residues I409–S411 and E462. Residues R493 to C494 and W539 contribute to the 5-methyltetrahydropteroyltri-L-glutamate site. D577 provides a ligand contact to L-homocysteine. D577 provides a ligand contact to L-methionine. Position 583 (E583) interacts with 5-methyltetrahydropteroyltri-L-glutamate. Residues H618, C620, and E642 each coordinate Zn(2+). H672 (proton donor) is an active-site residue. C704 is a Zn(2+) binding site.

The protein belongs to the vitamin-B12 independent methionine synthase family. It depends on Zn(2+) as a cofactor.

The catalysed reaction is 5-methyltetrahydropteroyltri-L-glutamate + L-homocysteine = tetrahydropteroyltri-L-glutamate + L-methionine. Its pathway is amino-acid biosynthesis; L-methionine biosynthesis via de novo pathway; L-methionine from L-homocysteine (MetE route): step 1/1. In terms of biological role, catalyzes the transfer of a methyl group from 5-methyltetrahydrofolate to homocysteine resulting in methionine formation. In Thermotoga maritima (strain ATCC 43589 / DSM 3109 / JCM 10099 / NBRC 100826 / MSB8), this protein is 5-methyltetrahydropteroyltriglutamate--homocysteine methyltransferase.